The chain runs to 235 residues: Sugar fermentation stimulation protein homolog (235 aa).

Belongs to the SfsA family.

This is Sugar fermentation stimulation protein homolog from Pseudomonas paraeruginosa (strain DSM 24068 / PA7) (Pseudomonas aeruginosa (strain PA7)).